Consider the following 67-residue polypeptide: Protein AaeX (67 aa).

Transmembrane regions (helical) follow at residues 3-23 and 43-63; these read LFPV…ELIL and FVWH…YLIS.

This sequence belongs to the AaeX family.

The protein resides in the cell membrane. In Enterobacter sp. (strain 638), this protein is Protein AaeX.